We begin with the raw amino-acid sequence, 261 residues long: Triosephosphate isomerase (261 aa).

Residue N10 to K12 participates in substrate binding. The active-site Electrophile is H100. The active-site Proton acceptor is E172. Substrate-binding positions include G178, S218, and G239–G240.

The protein belongs to the triosephosphate isomerase family. Homodimer.

Its subcellular location is the cytoplasm. It carries out the reaction D-glyceraldehyde 3-phosphate = dihydroxyacetone phosphate. It functions in the pathway carbohydrate biosynthesis; gluconeogenesis. The protein operates within carbohydrate degradation; glycolysis; D-glyceraldehyde 3-phosphate from glycerone phosphate: step 1/1. Its function is as follows. Involved in the gluconeogenesis. Catalyzes stereospecifically the conversion of dihydroxyacetone phosphate (DHAP) to D-glyceraldehyde-3-phosphate (G3P). The chain is Triosephosphate isomerase from Mycolicibacterium paratuberculosis (strain ATCC BAA-968 / K-10) (Mycobacterium paratuberculosis).